Consider the following 468-residue polypeptide: Pancreatic lipase-related protein 2 (468 aa).

Residues 1–16 (MLLCWIVSLLLATVGG) form the signal peptide. Residues C20 and C26 are joined by a disulfide bond. Residues 92 to 104 (VHGFIDKGEDGWL) form a required for galactolipase activity region. The cysteines at positions 108 and 119 are disulfide-linked. S170 (nucleophile) is an active-site residue. The Charge relay system role is filled by D194. The Ca(2+) site is built by E205, R208, D210, and D213. C255 and C279 are joined by a disulfide. The tract at residues 256–278 (QKNILSTIVDINGIWEGTQNFVA) is required for galactolipase activity. H281 acts as the Charge relay system in catalysis. Cystine bridges form between C303-C314 and C317-C322. Residues N352 and N427 are each glycosylated (N-linked (GlcNAc...) asparagine). The PLAT domain maps to 356–468 (WRYKVSVTLS…EDVLQSLYPC (113 aa)). An intrachain disulfide couples C452 to C468.

The protein belongs to the AB hydrolase superfamily. Lipase family. In terms of tissue distribution, expressed in pancreatic acinar cells (at protein level).

The protein resides in the secreted. It localises to the zymogen granule membrane. It is found in the cell projection. Its subcellular location is the neuron projection. It catalyses the reaction a triacylglycerol + H2O = a diacylglycerol + a fatty acid + H(+). It carries out the reaction a 1,2-diacyl-3-O-(beta-D-galactosyl)-sn-glycerol + 2 H2O = 3-beta-D-galactosyl-sn-glycerol + 2 a fatty acid + 2 H(+). The catalysed reaction is 1,2,3-tri-(9Z-octadecenoyl)-glycerol + H2O = di-(9Z)-octadecenoylglycerol + (9Z)-octadecenoate + H(+). The enzyme catalyses di-(9Z)-octadecenoylglycerol + H2O = (9Z-octadecenoyl)-glycerol + (9Z)-octadecenoate + H(+). It catalyses the reaction (9Z-octadecenoyl)-glycerol + H2O = glycerol + (9Z)-octadecenoate + H(+). It carries out the reaction 1-(9Z-octadecenoyl)-glycerol + H2O = glycerol + (9Z)-octadecenoate + H(+). The catalysed reaction is 1,2,3-tripropanoylglycerol + H2O = dipropanoylglycerol + propanoate + H(+). The enzyme catalyses 1,2,3-tributanoylglycerol + H2O = dibutanoylglycerol + butanoate + H(+). It catalyses the reaction 1,2,3-trioctanoylglycerol + H2O = dioctanoylglycerol + octanoate + H(+). It carries out the reaction 1,2-didecanoylglycerol + H2O = decanoylglycerol + decanoate + H(+). The catalysed reaction is long chain 1,2-diacyl-3-O-beta-D-galactosyl-sn-glycerol + H2O = long chain acyl-3-O-beta-D-galactosyl-sn-glycerol + a fatty acid + H(+). The enzyme catalyses 1,2-dioctanoyl-3-O-beta-D-galactosyl-sn-glycerol + H2O = octanoyl-3-(beta-D-galactosyl)-sn-glycerol + octanoate + H(+). It catalyses the reaction 1,2-didodecanoyl-3-beta-D-galactosyl-sn-glycerol + H2O = dodecanoyl-3-beta-D-galactosyl-sn-glycerol + dodecanoate + H(+). It carries out the reaction 1-beta-D-galactosyl-2,3-didodecanoyl-sn-glycerol + H2O = 1-beta-D-galactosyl-dodecanoyl-sn-glycerol + dodecanoate + H(+). The catalysed reaction is a 1,2-diacyl-3-O-[alpha-D-galactosyl-(1-&gt;6)-beta-D-galactosyl]-sn-glycerol + H2O = acyl-3-O-[alpha-D-galactosyl-(1-&gt;6)-beta-D-galactosyl]-sn-glycerol + a fatty acid + H(+). The enzyme catalyses long chain 1,2-diacyl-3-O-[alpha-D-galactosyl-(1-&gt;6)-beta-D-galactosyl]-sn-glycerol + H2O = long chain acyl-3-O-[alpha-D-galactosyl-(1-&gt;6)-beta-D-galactosyl]-sn-glycerol + a fatty acid + H(+). It catalyses the reaction 1,2-dioctanoyl-3-O-[alpha-D-galactosyl-(1-&gt;6)-beta-D-galactosyl]-sn-glycerol + H2O = octanoyl-3-O-[alpha-D-galactosyl-(1-&gt;6)-beta-D-galactosyl]-sn-glycerol + octanoate + H(+). It carries out the reaction 1,2-didodecanoyl-3-O-[alpha-D-galactosyl-(1-&gt;6)-beta-D-galactosyl]-sn-glycerol + H2O = dodecanoyl-3-O-[alpha-D-galactosyl-(1-&gt;6)-beta-D-galactosyl]-sn-glycerol + dodecanoate + H(+). The catalysed reaction is a 1,2-diacyl-sn-glycero-3-phosphocholine + H2O = a monoacyl-sn-glycero-3-phosphocholine + a fatty acid + H(+). It functions in the pathway glycerolipid metabolism; triacylglycerol degradation. The protein operates within glycolipid metabolism. With respect to regulation, CLPS stimulates triacylglycerol lipase activity. Triacylglycerol lipase activity is not inhibited by increasing bile salt concentration. In terms of biological role, lipase that primarily hydrolyzes triglycerides and galactosylglycerides. In neonates, may play a major role in pancreatic digestion of dietary fats such as milk fat globules enriched in long-chain triglycerides. Hydrolyzes short-, medium- and long-chain fatty acyls in triglycerides without apparent positional specificity. Can completely deacylate triacylglycerols. When the liver matures and bile salt synthesis increases, likely functions mainly as a galactolipase and monoacylglycerol lipase. Hydrolyzes monogalactosyldiglycerols (MGDG) and digalactosyldiacylglycerols (DGDG) present in a plant-based diet, releasing long-chain polyunsaturated fatty acids. Hydrolyzes medium- and long-chain fatty acyls in galactolipids. May act together with LIPF to hydrolyze partially digested triglycerides. Hydrolyzes long-chain monoglycerides with high efficiency. In cytotoxic T cells, contributes to perforin-dependent cell lysis, but is unlikely to mediate direct cytotoxicity. Also has low phospholipase activity. In neurons, required for the localization of the phospholipid 1-oleoyl-2-palmitoyl-PC (OPPC) to neurite tips through acyl chain remodeling of membrane phospholipids. The resulting OPPC-rich lipid membrane domain recruits the t-SNARE protein STX4 by selectively interacting with the STX4 transmembrane domain and this promotes surface expression of the dopamine transporter SLC6A3/DAT at neurite tips by facilitating fusion of SLC6A3-containing transport vesicles with the plasma membrane. This is Pancreatic lipase-related protein 2 from Rattus norvegicus (Rat).